Consider the following 531-residue polypeptide: RCC1 and BTB domain-containing protein 1 (531 aa).

RCC1 repeat units follow at residues 40 to 91 (NDEV…LLST), 93 to 145 (DGVV…ALAA), 147 to 198 (GEVF…AVLD), 199 to 250 (NGEV…ALTD), 252 to 302 (GLLY…AAKT), and 304 to 356 (GGHV…FLTV). BTB domains lie at 370–437 (ADLK…DLPP) and 470–499 (ENAF…INHL).

As to expression, ubiquitously expressed. In the retina, present in the nerve fiber layer and to a lesser extent in the inner and outer plexiform layers (at protein level).

It is found in the nucleus. May be involved in cell cycle regulation by chromatin remodeling. The polypeptide is RCC1 and BTB domain-containing protein 1 (RCBTB1) (Homo sapiens (Human)).